The sequence spans 57 residues: Large ribosomal subunit protein bL32 (57 aa).

The segment covering 1-20 (MAVPKRRMSRSNTRSRRAQW) has biased composition (basic residues). Residues 1 to 22 (MAVPKRRMSRSNTRSRRAQWKA) are disordered.

Belongs to the bacterial ribosomal protein bL32 family.

The polypeptide is Large ribosomal subunit protein bL32 (Mycobacterium sp. (strain JLS)).